A 643-amino-acid polypeptide reads, in one-letter code: Alpha-dioxygenase PIOX (643 aa).

His168 serves as the catalytic Proton acceptor. Residue Asp169 coordinates Ca(2+). His173 is a binding site for heme b. Residues Thr221, Trp223, Asp225, and Ser227 each coordinate Ca(2+). Residues His393, Arg490, and Arg494 each coordinate heme b.

This sequence belongs to the peroxidase family. Requires heme b as cofactor. Ca(2+) serves as cofactor.

The catalysed reaction is hexadecanoate + O2 = (2R)-2-hydroperoxyhexadecanoate. The enzyme catalyses dodecanoate + O2 = (2R)-2-hydroperoxydodecanoate. Functionally, alpha-dioxygenase that catalyzes the primary oxygenation step of a variety of 14-20 carbon fatty acids, containing up to three unsaturated bonds, into their corresponding 2R-hydroperoxides. Involved in the production of oxylipins that function in cell signaling, wound healing, and protection from infection. The alpha-oxidation pathway of fatty acids may play a role during plant developmental processes. In Pisum sativum (Garden pea), this protein is Alpha-dioxygenase PIOX.